The chain runs to 731 residues: Actin filament-associated protein 1 (731 aa).

Residue M1 is modified to N-acetylmethionine. A disordered region spans residues 46 to 90 (VKDHAQKAETNNLPAPPQMPLPEIPQPWLPPDSGPPPLPTSSLPE). The segment covering 59–84 (PAPPQMPLPEIPQPWLPPDSGPPPLP) has biased composition (pro residues). The SH3-binding motif lies at 70–73 (PQPW). The short motif at 93–96 (YEEA) is the SH2-binding 1 element. Residues 118 to 138 (GSSYESYDEEEEDGKGKKTQH) form a disordered region. The 97-residue stretch at 152 to 248 (DAKICAFLLR…WLKVIKEAYS (97 aa)) folds into the PH 1 domain. A disordered region spans residues 252-318 (GPVDPECSPP…SKSEAKGTVS (67 aa)). Basic and acidic residues predominate over residues 271–284 (AELEKKLSSERPSS). S283 and S284 each carry phosphoserine. Residues 348 to 442 (DVPTCGYLNV…WIGILLAETG (95 aa)) enclose the PH 2 domain. The short motif at 452-457 (YDYIDV) is the SH2-binding 2 element. The disordered stretch occupies residues 511–550 (SLKNKKPPASSNGLPVKGRAPSSQQKKVESAGGVKRTASN). Phosphoserine is present on S549. A coiled-coil region spans residues 558-649 (KNRVEADAKR…VKESLKKALA (92 aa)). The interaction with F-actin stretch occupies residues 595-638 (DLRAAIEVNAGRKTQVALEDKLKRLEEECKQREAERVSLELELT). A disordered region spans residues 657–731 (AIEPKSGTSS…AREWELKNGT (75 aa)). Phosphoserine occurs at positions 665, 666, and 669. T676 carries the post-translational modification Phosphothreonine. Residues 678–687 (ENSPISSCDT) show a composition bias toward polar residues. Phosphoserine is present on residues S680 and S688. Basic and acidic residues predominate over residues 721–731 (KAREWELKNGT).

Monomer and homomultimer. Interacts via its C-terminus with F-actin; probably involving AFAP1 multimers. Interacts with activated SRC SH3-SH2 domains. Interacts via its PH 1 domain with PRKCA, PRKCB and PRKCI. Phosphorylated on tyrosine residues. In terms of tissue distribution, widely expressed with highest levels in brain.

It localises to the cytoplasm. The protein localises to the cytoskeleton. The protein resides in the stress fiber. Functionally, can cross-link actin filaments into both network and bundle structures. May modulate changes in actin filament integrity and induce lamellipodia formation. May function as an adapter molecule that links other proteins, such as SRC and PKC to the actin cytoskeleton. The protein is Actin filament-associated protein 1 (Afap1) of Rattus norvegicus (Rat).